The sequence spans 1115 residues: Disheveled-associated activator of morphogenesis 2 (1115 aa).

Positions 40-416 (GPIPNPEELN…QIVLQDERGV (377 aa)) constitute a GBD/FH3 domain. Residues 434-515 (MLINENEVKQ…ELVARHNESS (82 aa)) are a coiled coil. 2 disordered regions span residues 510–605 (RHNE…SHPL) and 655–697 (QEGP…SATG). One can recognise an FH1 domain in the interval 518-694 (PVSSPPPPGG…TEKASRSMVS (177 aa)). A compositionally biased stretch (pro residues) spans 540–583 (LPPPPPPLPFDSCPPPPAPPLPPGGPPIPPGAPPCFSSGPPPSH). An FH2 domain is found at 595–1042 (KKRIPQPSHP…DERRARMEFM (448 aa)). The DAD domain occupies 1065–1095 (EESGEFDDLVSALRSGEVFDKDLSKFKRNRK).

The protein belongs to the formin homology family. As to quaternary structure, interacts with DVL3. Interacts with INF2. In terms of tissue distribution, in early embryogenesis, expression is confined to embryonic ectoderm. Highly dynamic expression in later stages of gastrulation. In early somite stages, detected in posterior node and persists until 9-10 somites have developed when expression is concentrated in the chordoneural hinge. During organogenesis, expressed in the CNS, PNS, liver primordia, limb buds and genital tubercle.

Its function is as follows. Key regulator of the Wnt signaling pathway, which is required for various processes during development, such as dorsal patterning, determination of left/right symmetry or myelination in the central nervous system. Acts downstream of Wnt ligands and upstream of beta-catenin (CTNNB1). Required for canonical Wnt signaling pathway during patterning in the dorsal spinal cord by promoting the aggregation of Disheveled (Dvl) complexes, thereby clustering and formation of Wnt receptor signalosomes and potentiating Wnt activity. During dorsal patterning of the spinal cord, inhibits oligodendrocytes differentiation via interaction with PIP5K1A. Also regulates non-canonical Wnt signaling pathway. Acts downstream of PITX2 in the developing gut and is required for left/right asymmetry within dorsal mesentery: affects mesenchymal condensation by lengthening cadherin-based junctions through WNT5A and non-canonical Wnt signaling, inducing polarized condensation in the left dorsal mesentery necessary to initiate gut rotation. Together with DAAM1, required for myocardial maturation and sarcomere assembly. Is a regulator of actin nucleation and elongation, filopodia formation and podocyte migration. This is Disheveled-associated activator of morphogenesis 2 from Mus musculus (Mouse).